The chain runs to 95 residues: Protein TusB (95 aa).

Belongs to the DsrH/TusB family. In terms of assembly, heterohexamer, formed by a dimer of trimers. The hexameric TusBCD complex contains 2 copies each of TusB, TusC and TusD. The TusBCD complex interacts with TusE.

It is found in the cytoplasm. Functionally, part of a sulfur-relay system required for 2-thiolation of 5-methylaminomethyl-2-thiouridine (mnm(5)s(2)U) at tRNA wobble positions. This is Protein TusB from Pectobacterium parmentieri.